Reading from the N-terminus, the 400-residue chain is Bifunctional enzyme IspD/IspF (400 aa).

The interval 1–240 (MQESTMKFGI…EKLSHALPDV (240 aa)) is 2-C-methyl-D-erythritol 4-phosphate cytidylyltransferase. Positions 241-400 (RTGNGYDVHQ…ATVVYQGRPL (160 aa)) are 2-C-methyl-D-erythritol 2,4-cyclodiphosphate synthase. Residues Asp247 and His249 each contribute to the a divalent metal cation site. Residues 247 to 249 (DVH) and 273 to 274 (HS) each bind 4-CDP-2-C-methyl-D-erythritol 2-phosphate. His281 serves as a coordination point for a divalent metal cation. 4-CDP-2-C-methyl-D-erythritol 2-phosphate contacts are provided by residues 295–297 (DIG), 371–374 (TTNE), Phe378, and Arg381.

The protein in the N-terminal section; belongs to the IspD/TarI cytidylyltransferase family. IspD subfamily. This sequence in the C-terminal section; belongs to the IspF family. The cofactor is a divalent metal cation.

It catalyses the reaction 2-C-methyl-D-erythritol 4-phosphate + CTP + H(+) = 4-CDP-2-C-methyl-D-erythritol + diphosphate. It carries out the reaction 4-CDP-2-C-methyl-D-erythritol 2-phosphate = 2-C-methyl-D-erythritol 2,4-cyclic diphosphate + CMP. The protein operates within isoprenoid biosynthesis; isopentenyl diphosphate biosynthesis via DXP pathway; isopentenyl diphosphate from 1-deoxy-D-xylulose 5-phosphate: step 2/6. Its pathway is isoprenoid biosynthesis; isopentenyl diphosphate biosynthesis via DXP pathway; isopentenyl diphosphate from 1-deoxy-D-xylulose 5-phosphate: step 4/6. Bifunctional enzyme that catalyzes the formation of 4-diphosphocytidyl-2-C-methyl-D-erythritol from CTP and 2-C-methyl-D-erythritol 4-phosphate (MEP) (IspD), and catalyzes the conversion of 4-diphosphocytidyl-2-C-methyl-D-erythritol 2-phosphate (CDP-ME2P) to 2-C-methyl-D-erythritol 2,4-cyclodiphosphate (ME-CPP) with a corresponding release of cytidine 5-monophosphate (CMP) (IspF). The chain is Bifunctional enzyme IspD/IspF from Agrobacterium fabrum (strain C58 / ATCC 33970) (Agrobacterium tumefaciens (strain C58)).